Here is an 81-residue protein sequence, read N- to C-terminus: U6-theraphotoxin-Hs1a (81 aa).

An N-terminal signal peptide occupies residues 1–21; sequence MKASMFLALAGLVLLFVVCYA. A propeptide spanning residues 22-48 is cleaved from the precursor; that stretch reads SESEEKEFPRELLSTIFAVDDFKGEER. 2 cysteine pairs are disulfide-bonded: Cys50–Cys65 and Cys57–Cys70.

Belongs to the neurotoxin 10 (Hwtx-1) family. 51 (Hntx-8) subfamily. In terms of tissue distribution, expressed by the venom gland.

The protein localises to the secreted. Functionally, binds to the nicotinic acetylcholine receptor. Blocks neuromuscular transmission. This chain is U6-theraphotoxin-Hs1a, found in Cyriopagopus schmidti (Chinese bird spider).